The chain runs to 119 residues: Large ribosomal subunit protein uL22 (119 aa).

This sequence belongs to the universal ribosomal protein uL22 family. In terms of assembly, part of the 50S ribosomal subunit.

In terms of biological role, this protein binds specifically to 23S rRNA; its binding is stimulated by other ribosomal proteins, e.g. L4, L17, and L20. It is important during the early stages of 50S assembly. It makes multiple contacts with different domains of the 23S rRNA in the assembled 50S subunit and ribosome. Its function is as follows. The globular domain of the protein is located near the polypeptide exit tunnel on the outside of the subunit, while an extended beta-hairpin is found that lines the wall of the exit tunnel in the center of the 70S ribosome. This chain is Large ribosomal subunit protein uL22, found in Rickettsia peacockii (strain Rustic).